Consider the following 149-residue polypeptide: Flagellar basal-body protein FlbY (149 aa).

In terms of assembly, the basal body constitutes a major portion of the flagellar organelle and consists of five rings (E,L,P,S, and M) mounted on a central rod.

It is found in the bacterial flagellum basal body. This is Flagellar basal-body protein FlbY (flbY) from Caulobacter vibrioides (strain ATCC 19089 / CIP 103742 / CB 15) (Caulobacter crescentus).